A 128-amino-acid polypeptide reads, in one-letter code: Sirohydrochlorin cobaltochelatase (128 aa).

The Proton acceptor role is filled by H9. H9 is a Co(2+) binding site. Substrate contacts are provided by residues K43 and F68–H73. H73 contributes to the Co(2+) binding site.

Belongs to the CbiX family. CbiXS subfamily. As to quaternary structure, homotetramer; dimer of dimers.

It carries out the reaction Co-sirohydrochlorin + 2 H(+) = sirohydrochlorin + Co(2+). It participates in cofactor biosynthesis; adenosylcobalamin biosynthesis; cob(II)yrinate a,c-diamide from sirohydrochlorin (anaerobic route): step 1/10. In terms of biological role, catalyzes the insertion of Co(2+) into sirohydrochlorin as part of the anaerobic pathway to cobalamin biosynthesis. In Saccharolobus islandicus (strain Y.N.15.51 / Yellowstone #2) (Sulfolobus islandicus), this protein is Sirohydrochlorin cobaltochelatase.